The sequence spans 553 residues: CDP-diacylglycerol--glycerol-3-phosphate 3-phosphatidyltransferase, mitochondrial (553 aa).

A mitochondrion-targeting transit peptide spans 1–25; it reads MAAPAAGPVFWRRLLGLLPGRPGLA. The residue at position 46 (Ser46) is a Phosphoserine. Residue 121 to 128 participates in ATP binding; it reads ASLYLGTG. 2 consecutive PLD phosphodiesterase domains span residues 212 to 238 and 457 to 490; these read TIGL…SDSY and TGWT…GYRS. Residues His217, Lys219, and Asp224 contribute to the active site.

The protein belongs to the CDP-alcohol phosphatidyltransferase class-II family.

It is found in the mitochondrion. The enzyme catalyses a CDP-1,2-diacyl-sn-glycerol + sn-glycerol 3-phosphate = a 1,2-diacyl-sn-glycero-3-phospho-(1'-sn-glycero-3'-phosphate) + CMP + H(+). It functions in the pathway phospholipid metabolism; phosphatidylglycerol biosynthesis; phosphatidylglycerol from CDP-diacylglycerol: step 1/2. Activated by calcium and magnesium and inhibited by other bivalent cations. Its function is as follows. Functions in the biosynthesis of the anionic phospholipids phosphatidylglycerol and cardiolipin. The chain is CDP-diacylglycerol--glycerol-3-phosphate 3-phosphatidyltransferase, mitochondrial (PGS1) from Cricetulus griseus (Chinese hamster).